The primary structure comprises 117 residues: MNNAIMDMVDKANQKENAPQFDIGDTVDVHSKILEGNKERIQVFTGVVIGRSGKGAQEMFTVRRIVAGEGVERKFPVHSPRIEKVEVKRSGVTRRAKLYFLRDRVGKAVRLKERRRV.

It belongs to the bacterial ribosomal protein bL19 family.

In terms of biological role, this protein is located at the 30S-50S ribosomal subunit interface and may play a role in the structure and function of the aminoacyl-tRNA binding site. The sequence is that of Large ribosomal subunit protein bL19 from Rhodopirellula baltica (strain DSM 10527 / NCIMB 13988 / SH1).